Consider the following 348-residue polypeptide: L-threonine 3-dehydrogenase (348 aa).

Position 42 (Cys-42) interacts with Zn(2+). Active-site charge relay system residues include Thr-44 and His-47. His-67, Glu-68, Cys-97, Cys-100, Cys-103, and Cys-111 together coordinate Zn(2+). Residues Leu-179, Glu-199, Arg-204, Leu-266–Leu-268, and Ile-291–Thr-292 contribute to the NAD(+) site.

This sequence belongs to the zinc-containing alcohol dehydrogenase family. As to quaternary structure, homotetramer. Zn(2+) serves as cofactor.

It localises to the cytoplasm. The enzyme catalyses L-threonine + NAD(+) = (2S)-2-amino-3-oxobutanoate + NADH + H(+). Its pathway is amino-acid degradation; L-threonine degradation via oxydo-reductase pathway; glycine from L-threonine: step 1/2. Functionally, catalyzes the NAD(+)-dependent oxidation of L-threonine to 2-amino-3-ketobutyrate. The sequence is that of L-threonine 3-dehydrogenase from Pyrococcus abyssi (strain GE5 / Orsay).